Here is a 426-residue protein sequence, read N- to C-terminus: MINPWSSSDFFDYERLKREFGIGDMNVPFDHFLFRRHLILGQRSIDYIDYALKHHMKFNVMTGLMPSGEMHLGNKSAIDQVIFFQKLGGRVSIAVADLESYSTRGISLERAREVAIEKYILNYIAMGLEPCEIYFQSRNSDVQFLAYMLGNRTNMSELRSLYGFTDTHDLLHINAPLIQAADVLHTQMKKYGGPAPTVVPVGFDQDPHLRLMRDLAKRMRIFNIQLENDLVVSVRGKDDPKEYIDMAYEYLSSRYTNVKKDYEYRVVRADGVDQQDLVGIDLDLAHMETKYNDFAFIAPSATYQKLMKGLKGGKMSSSVPDSLISLNDDPKEARRKIMAGMTGGRDTEEEQRRLGGEPDRCPIFDLYNYEIDDDKHVKEVYDDCRNGKRMCGFCKREIADRMASWLSDLSKKREEAREKLSLYIHE.

Positions 66–74 match the 'HIGH' region motif; the sequence is PSGEMHLGN. The 'KMSKS' region motif lies at 314-318; it reads KMSSS.

It belongs to the class-I aminoacyl-tRNA synthetase family.

The protein localises to the cytoplasm. The catalysed reaction is tRNA(Trp) + L-tryptophan + ATP = L-tryptophyl-tRNA(Trp) + AMP + diphosphate + H(+). This is Tryptophan--tRNA ligase from Thermoplasma acidophilum (strain ATCC 25905 / DSM 1728 / JCM 9062 / NBRC 15155 / AMRC-C165).